The chain runs to 684 residues: DNA ligase (684 aa).

NAD(+) is bound by residues 48-52 (DYEYD), 97-98 (SL), and Glu-129. Lys-131 acts as the N6-AMP-lysine intermediate in catalysis. NAD(+)-binding residues include Arg-152, Glu-189, Lys-310, and Lys-334. Zn(2+)-binding residues include Cys-429, Cys-432, Cys-447, and Cys-452. One can recognise a BRCT domain in the interval 609-684 (AQEGSLSGMS…ISWEELQAMI (76 aa)).

Belongs to the NAD-dependent DNA ligase family. LigA subfamily. Requires Mg(2+) as cofactor. Mn(2+) is required as a cofactor.

The catalysed reaction is NAD(+) + (deoxyribonucleotide)n-3'-hydroxyl + 5'-phospho-(deoxyribonucleotide)m = (deoxyribonucleotide)n+m + AMP + beta-nicotinamide D-nucleotide.. In terms of biological role, DNA ligase that catalyzes the formation of phosphodiester linkages between 5'-phosphoryl and 3'-hydroxyl groups in double-stranded DNA using NAD as a coenzyme and as the energy source for the reaction. It is essential for DNA replication and repair of damaged DNA. The polypeptide is DNA ligase (Bdellovibrio bacteriovorus (strain ATCC 15356 / DSM 50701 / NCIMB 9529 / HD100)).